Here is a 715-residue protein sequence, read N- to C-terminus: Polyribonucleotide nucleotidyltransferase (715 aa).

Mg(2+) is bound by residues aspartate 487 and aspartate 493. Residues 554 to 613 form the KH domain; it reads PRIETFKIATDKIREVIGTGGKVIREIVEKTGAKVNIDDDGTVKVASSDGESIKAAIKWI. The region spanning 623–691 is the S1 motif domain; sequence NAIYDGTVVK…DRGKTRLSMK (69 aa). Residues 696 to 715 form a disordered region; that stretch reads ETGEDLEAKQKAAEGATAAE.

The protein belongs to the polyribonucleotide nucleotidyltransferase family. The cofactor is Mg(2+).

It localises to the cytoplasm. The catalysed reaction is RNA(n+1) + phosphate = RNA(n) + a ribonucleoside 5'-diphosphate. Functionally, involved in mRNA degradation. Catalyzes the phosphorolysis of single-stranded polyribonucleotides processively in the 3'- to 5'-direction. The protein is Polyribonucleotide nucleotidyltransferase of Rhodopseudomonas palustris (strain BisB18).